A 225-amino-acid chain; its full sequence is Germin-like protein 8-3 (225 aa).

Positions 1-23 (MASSSLFLLASLLVLASWQQAIA) are cleaved as a signal peptide. Cysteine 33 and cysteine 48 are disulfide-bonded. Residues asparagine 53 and asparagine 78 are each glycosylated (N-linked (GlcNAc...) asparagine). The Cupin type-1 domain maps to 60-213 (FNAAKFDMPR…AFQVEKKVID (154 aa)). Residues histidine 111, histidine 113, glutamate 118, and histidine 158 each contribute to the Mn(2+) site.

It belongs to the germin family. Oligomer (believed to be a pentamer but probably hexamer).

The protein resides in the secreted. The protein localises to the extracellular space. Its subcellular location is the apoplast. Functionally, plays a role in broad-spectrum disease resistance. Probably has no oxalate oxidase activity even if the active site is conserved. This is Germin-like protein 8-3 (GER2) from Oryza sativa subsp. japonica (Rice).